A 270-amino-acid chain; its full sequence is Formamidopyrimidine-DNA glycosylase (270 aa).

Pro-2 acts as the Schiff-base intermediate with DNA in catalysis. Glu-3 (proton donor) is an active-site residue. The Proton donor; for beta-elimination activity role is filled by Lys-58. DNA contacts are provided by His-91, Arg-110, and Arg-151. The FPG-type zinc finger occupies 236 to 270 (FVYGRGGQPCKVCGTELREVKLGQRASVFCPKCQR). The active-site Proton donor; for delta-elimination activity is Arg-260.

It belongs to the FPG family. Monomer. The cofactor is Zn(2+).

It carries out the reaction Hydrolysis of DNA containing ring-opened 7-methylguanine residues, releasing 2,6-diamino-4-hydroxy-5-(N-methyl)formamidopyrimidine.. It catalyses the reaction 2'-deoxyribonucleotide-(2'-deoxyribose 5'-phosphate)-2'-deoxyribonucleotide-DNA = a 3'-end 2'-deoxyribonucleotide-(2,3-dehydro-2,3-deoxyribose 5'-phosphate)-DNA + a 5'-end 5'-phospho-2'-deoxyribonucleoside-DNA + H(+). Involved in base excision repair of DNA damaged by oxidation or by mutagenic agents. Acts as a DNA glycosylase that recognizes and removes damaged bases. Has a preference for oxidized purines, such as 7,8-dihydro-8-oxoguanine (8-oxoG). Has AP (apurinic/apyrimidinic) lyase activity and introduces nicks in the DNA strand. Cleaves the DNA backbone by beta-delta elimination to generate a single-strand break at the site of the removed base with both 3'- and 5'-phosphates. The sequence is that of Formamidopyrimidine-DNA glycosylase from Pseudomonas entomophila (strain L48).